The chain runs to 104 residues: Putative zinc finger protein ORF104b (104 aa).

A C2H2-type zinc finger spans residues 62–85 (YECKYCHTRYLSHTGIVYHLEREH).

This is Putative zinc finger protein ORF104b from Acidianus sp. F28 (AFV-2).